A 275-amino-acid chain; its full sequence is Large ribosomal subunit protein uL2 (275 aa).

The segment at 220–275 (VRGAAMNPRDHPHGGGEGRAPRGMPTPKTKWGKPARGVKTRHNPRTDPFIIRRRTR) is disordered. The span at 227–239 (PRDHPHGGGEGRA) shows a compositional bias: basic and acidic residues. The span at 249 to 262 (KWGKPARGVKTRHN) shows a compositional bias: basic residues.

Belongs to the universal ribosomal protein uL2 family. As to quaternary structure, part of the 50S ribosomal subunit. Forms a bridge to the 30S subunit in the 70S ribosome.

One of the primary rRNA binding proteins. Required for association of the 30S and 50S subunits to form the 70S ribosome, for tRNA binding and peptide bond formation. It has been suggested to have peptidyltransferase activity; this is somewhat controversial. Makes several contacts with the 16S rRNA in the 70S ribosome. This is Large ribosomal subunit protein uL2 from Roseiflexus sp. (strain RS-1).